The primary structure comprises 154 residues: UPF0225 protein Spro_2712 (154 aa).

It belongs to the UPF0225 family.

The polypeptide is UPF0225 protein Spro_2712 (Serratia proteamaculans (strain 568)).